A 641-amino-acid polypeptide reads, in one-letter code: Protein GAMETE EXPRESSED 3 (641 aa).

An N-terminal signal peptide occupies residues 1–29 (MVAFRFVYIPLPFFFFFFFFFVFFSGVSQ). A helical transmembrane segment spans residues 441–461 (IIWFLLFEFVIMVLFAALVRF). A disordered region spans residues 570–627 (ITIFQTPSDESSSEESYRDEHYDDVADDEHDEDDLDRKQKGKLLAHSEGSSNDGDGIA). Residues 584–593 (ESYRDEHYDD) are compositionally biased toward basic and acidic residues. Residues 594–603 (VADDEHDEDD) are compositionally biased toward acidic residues.

As to expression, expressed in mature siliques and in pollen, mainly in the sperm cells. Detected in the egg cell within the female gametophyte.

The protein resides in the cell membrane. In terms of biological role, required for micropylar pollen tube guidance. Plays a role during early embryo patterning. The sequence is that of Protein GAMETE EXPRESSED 3 (GEX3) from Arabidopsis thaliana (Mouse-ear cress).